The primary structure comprises 753 residues: Polyribonucleotide nucleotidyltransferase (753 aa).

Residues Asp-488 and Asp-494 each coordinate Mg(2+). The KH domain maps to 555–614; the sequence is PKLYTMKINPEKIRDVIGKGGSTIRALTEETGTQIDIGEDGTITIASSDAAKADEAKRRI. Residues 624–692 enclose the S1 motif domain; it reads GKIYEGPVTK…EKGRVKLSLK (69 aa). A disordered region spans residues 692-753; it reads KALTERPAGM…EGEQQQQQQQ (62 aa). Residues 699–739 show a composition bias toward basic and acidic residues; sequence AGMERSDRPAPAEREFRQPREPRQQREFREPREPREPRDGG.

Belongs to the polyribonucleotide nucleotidyltransferase family. The cofactor is Mg(2+).

The protein resides in the cytoplasm. The catalysed reaction is RNA(n+1) + phosphate = RNA(n) + a ribonucleoside 5'-diphosphate. Its function is as follows. Involved in mRNA degradation. Catalyzes the phosphorolysis of single-stranded polyribonucleotides processively in the 3'- to 5'-direction. The protein is Polyribonucleotide nucleotidyltransferase of Delftia acidovorans (strain DSM 14801 / SPH-1).